We begin with the raw amino-acid sequence, 125 residues long: Putative zinc finger A20 and AN1 domain-containing stress-associated protein 8 (125 aa).

An A20-type zinc finger spans residues 2-36; it reads TGEPSLCIRGCGFFSTSQTKNLCSKCYNDFLKDES. Residues Cys8, Cys12, Cys24, Cys27, Cys80, Cys82, His96, and Cys98 each contribute to the Zn(2+) site. Residues 61-106 form an AN1-type; degenerate zinc finger; sequence LGSKGGCACKKKVGLLGFHCRCGHLFFASHRYPEEHSCPSDYKSAA.

Its function is as follows. May be involved in environmental stress response. The chain is Putative zinc finger A20 and AN1 domain-containing stress-associated protein 8 (SAP8) from Arabidopsis thaliana (Mouse-ear cress).